Reading from the N-terminus, the 805-residue chain is Replication restart protein PriA (805 aa).

The tract at residues 1-110 (MNFAEVIVDV…QAMLPAALKA (110 aa)) is 3'BD. Positions 111 to 166 (KYEKELKIAHGADLPPQVERLFSETKTLLYSDIPDHETLKLIQRHVQKGDIDVTYK) are linker. Residues 167–253 (VAQKTNKKMV…KESYEEVYRD (87 aa)) are WH. Residues 282 to 448 (TLDSDEHKVF…QKGVYELLSL (167 aa)) enclose the Helicase ATP-binding domain. 295–302 (GVTGSGKT) is an ATP binding site. Positions 391-394 (DEEH) match the DEAH box motif. Residues C510, C513, C519, C522, C537, C540, C550, and C553 each coordinate Zn(2+). The Helicase C-terminal domain maps to 545 to 699 (PVPHTCPECA…TFYQHEMAHR (155 aa)).

The protein belongs to the helicase family. PriA subfamily. Monomer. Component of the replication restart primosome which assembles in this order; PriA, DnaD then DnaB. The preferred DNA substrate mimics an arrested DNA replication fork with unreplicated lagging strand. Interacts with DnaD but not DnaB. Interacts with SSB (sbbA) via the latter's 35 residue C-terminal tail which tethers PriA to ssDNA. Colocalizes with DNA pol III subunit gamma/tau (dnaX). May interact with RarA. Requires Zn(2+) as cofactor.

The protein localises to the cytoplasm. It localises to the nucleoid. The enzyme catalyses Couples ATP hydrolysis with the unwinding of duplex DNA by translocating in the 3'-5' direction.. It catalyses the reaction ATP + H2O = ADP + phosphate + H(+). Its function is as follows. Initiates the restart of stalled replication forks, which reloads the replicative helicase on sites other than the origin of replication. Recognizes and binds to abandoned replication forks and remodels them to uncover a helicase loading site. Promotes assembly of the primosome at these replication forks. Serves as the initiating protein for assembly of the replication restart primosome; binding of PriA to an arrested DNA replication fork with unreplicated lagging strand triggers assembly. Sequentially DnaD (possibly as a dimer) and DnaB homotetramers bind. Assembly probably continues by loading of the DnaC replicative helicase aided by helicase loader DnaI. A single-strand (ss)DNA-dependent ATPase with helicase activity. Recognizes and binds the arrested nascent DNA chain at stalled replication forks. Binds forked DNA substrates and makes a larger complex with RarA; RarA has no effect on the helicase function. Binds ssDNA, D-loops and replication fork-like substrates but not double-stranded (ds)DNA; the preferred DNA substrate mimics an arrested DNA replication fork with an unreplicated lagging strand. Recognizes nicked dsDNA. A supershift on ssDNA occurs in the presence of single-stranded binding protein (SSB). Cannot substitute for E.coli PriA. In terms of biological role, required for replication of plasmids that have a rolling circle mechanism, which produces circular single-stranded (ss)DNA intermediates corresponding to the lagging strand template, which are then converted into double-stranded (ds)DNA; priA is required to activate the conversion of ssDNA into dsDNA. In Bacillus subtilis (strain 168), this protein is Replication restart protein PriA.